Here is a 177-residue protein sequence, read N- to C-terminus: ATP synthase subunit b, chloroplastic (177 aa).

Residues 26–44 form a helical membrane-spanning segment; that stretch reads IINLSIVLFVVIRFLGEAL.

Belongs to the ATPase B chain family. In terms of assembly, F-type ATPases have 2 components, F(1) - the catalytic core - and F(0) - the membrane proton channel. F(1) has five subunits: alpha(3), beta(3), gamma(1), delta(1), epsilon(1). F(0) has four main subunits: a(1), b(1), b'(1) and c(10-14). The alpha and beta chains form an alternating ring which encloses part of the gamma chain. F(1) is attached to F(0) by a central stalk formed by the gamma and epsilon chains, while a peripheral stalk is formed by the delta, b and b' chains.

Its subcellular location is the plastid. It localises to the chloroplast thylakoid membrane. Its function is as follows. F(1)F(0) ATP synthase produces ATP from ADP in the presence of a proton or sodium gradient. F-type ATPases consist of two structural domains, F(1) containing the extramembraneous catalytic core and F(0) containing the membrane proton channel, linked together by a central stalk and a peripheral stalk. During catalysis, ATP synthesis in the catalytic domain of F(1) is coupled via a rotary mechanism of the central stalk subunits to proton translocation. Functionally, component of the F(0) channel, it forms part of the peripheral stalk, linking F(1) to F(0). This Bigelowiella natans (Pedinomonas minutissima) protein is ATP synthase subunit b, chloroplastic.